We begin with the raw amino-acid sequence, 160 residues long: Dysbindin domain-containing protein 1 (160 aa).

2 disordered regions span residues 1 to 34 (MESP…GDTC) and 95 to 160 (ADSD…PKED). Phosphoserine occurs at positions 3, 97, and 121. Residues 127–143 (TRAEQNREKQTPSDPER) are compositionally biased toward basic and acidic residues.

It belongs to the dysbindin family.

The polypeptide is Dysbindin domain-containing protein 1 (Dbndd1) (Rattus norvegicus (Rat)).